The primary structure comprises 425 residues: UDP-N-acetylglucosamine 1-carboxyvinyltransferase (425 aa).

23–24 (KN) lines the phosphoenolpyruvate pocket. Arginine 100 is a binding site for UDP-N-acetyl-alpha-D-glucosamine. Catalysis depends on cysteine 124, which acts as the Proton donor. Cysteine 124 bears the 2-(S-cysteinyl)pyruvic acid O-phosphothioketal mark. UDP-N-acetyl-alpha-D-glucosamine-binding positions include 169-172 (KVSV), aspartate 313, and valine 335.

Belongs to the EPSP synthase family. MurA subfamily.

It localises to the cytoplasm. It catalyses the reaction phosphoenolpyruvate + UDP-N-acetyl-alpha-D-glucosamine = UDP-N-acetyl-3-O-(1-carboxyvinyl)-alpha-D-glucosamine + phosphate. It participates in cell wall biogenesis; peptidoglycan biosynthesis. Functionally, cell wall formation. Adds enolpyruvyl to UDP-N-acetylglucosamine. The protein is UDP-N-acetylglucosamine 1-carboxyvinyltransferase of Wolbachia pipientis subsp. Culex pipiens (strain wPip).